A 172-amino-acid chain; its full sequence is Peptidyl-prolyl cis-trans isomerase (172 aa).

The PPIase cyclophilin-type domain maps to 7–170 (FFDMTVGGAP…KVVKVADCGQ (164 aa)).

This sequence belongs to the cyclophilin-type PPIase family.

It is found in the cytoplasm. It carries out the reaction [protein]-peptidylproline (omega=180) = [protein]-peptidylproline (omega=0). With respect to regulation, binds cyclosporin A (CsA). CsA mediates some of its effects via an inhibitory action on PPIase. Functionally, PPIases accelerate the folding of proteins. It catalyzes the cis-trans isomerization of proline imidic peptide bonds in oligopeptides. The sequence is that of Peptidyl-prolyl cis-trans isomerase (CYP) from Zea mays (Maize).